Here is a 560-residue protein sequence, read N- to C-terminus: Nuclear receptor subfamily 5 group A member 2 (560 aa).

The disordered stretch occupies residues 21–55 (IASAPGSETRHSPKREEQLREKRAGLPDRHRRPIP). The segment covering 28–48 (ETRHSPKREEQLREKRAGLPD) has biased composition (basic and acidic residues). The nuclear receptor DNA-binding region spans 104–175 (EELCPVCGDK…KCIDVGMKLE (72 aa)). Positions 107, 110, 124, 127, 143, 149, 159, and 162 each coordinate Zn(2+). 2 consecutive NR C4-type zinc fingers follow at residues 107-127 (CPVC…CESC) and 143-167 (CIEN…FKKC). The tract at residues 173–188 (KLEAVRADRMRGGRNK) is C-terminal extension (CTE). Positions 189 to 208 (FGPMYKRDRALKQQKKALIR) match the FTZ-F1 box motif. Residue K289 forms a Glycyl lysine isopeptide (Lys-Gly) (interchain with G-Cter in SUMO1) linkage. In terms of domain architecture, NR LBD spans 319–558 (SIPHLILELL…NLLIEMLHAK (240 aa)). 2 residues coordinate a phospholipid derivative: Y535 and K539. The AF-2 stretch occupies residues 547–558 (YNNLLIEMLHAK).

The protein belongs to the nuclear hormone receptor family. NR5 subfamily. As to quaternary structure, monomer; Binds DNA as a monomer. Interacts with nuclear receptor corepressors NR0B1 and NR0B2; repressing NR5A2 nuclear receptor activity. Interacts with nuclear receptor coactivators CTNNB1, PPARGC1A and NCOA2; interaction takes place following ligand-binding and promotes target gene activation. Interacts (when sumoylated) with GPS2; interaction with GPS2 onto hepatic acute phase protein promoters prevents N-Cor corepressor complex dissociation. Interacts with HNF1A. Interacts with GRIP1. In terms of processing, sumoylated by SUMO1 at Lys-289 during the hepatic acute phase response, leading to promote interaction with GPS2 and prevent N-Cor corepressor complex dissociation.

The protein resides in the nucleus. It localises to the chromosome. In terms of biological role, orphan nuclear receptor that binds DNA as a monomer to the 5'-TCAAGGCCA-3' sequence and controls expression of target genes: regulates key biological processes, such as early embryonic development, cholesterol and bile acid synthesis pathways, as well as liver and pancreas morphogenesis. Ligand-binding causes conformational change which causes recruitment of coactivators, promoting target gene activation. The specific ligand is unknown, but specific phospholipids, such as phosphatidylethanolamine, phosphatidylserine, dilauroyl phosphatidylcholine and diundecanoyl phosphatidylcholine can act as ligand in vitro. Acts as a pioneer transcription factor, which unwraps target DNA from histones and elicits local opening of closed chromatin. Plays a central role during preimplantation stages of embryonic development. Plays a minor role in zygotic genome activation (ZGA) by regulating a small set of two-cell stage genes. Plays a major role in morula development (2-16 cells embryos) by acting as a master regulator at the 8-cell stage, controlling expression of lineage-specifying transcription factors and genes involved in mitosis, telomere maintenance and DNA repair. Zygotic NR5A2 binds to both closed and open chromatin with other transcription factors, often at SINE B1/Alu repeats DNA elements, promoting chromatin accessibility at nearby regulatory regions. Also involved in the epiblast stage of development and embryonic stem cell pluripotency, by promoting expression of POU5F1/OCT4. Regulates other processes later in development, such as formation of connective tissue in lower jaw and middle ear, neural stem cell differentiation, ovarian follicle development and Sertoli cell differentiation. Involved in exocrine pancreas development and acinar cell differentiation. Acts as an essential transcriptional regulator of lipid metabolism. Key regulator of cholesterol 7-alpha-hydroxylase gene (CYP7A) expression in liver. Activates the transcription of CYP2C38. Also acts as a negative regulator of inflammation in different organs, such as intestine, liver and pancreas. Protects against intestinal inflammation via its ability to regulate glucocorticoid production. Plays an anti-inflammatory role during the hepatic acute phase response by acting as a corepressor: inhibits the hepatic acute phase response by preventing dissociation of the N-Cor corepressor complex. Acts as a regulator of immunity by promoting lymphocyte T-cell development, proliferation and effector functions. Also involved in resolution of endoplasmic reticulum stress in the liver. This is Nuclear receptor subfamily 5 group A member 2 from Mus musculus (Mouse).